A 558-amino-acid chain; its full sequence is INCREASED PETAL GROWTH ANISOTROPY 1-like protein 2 (558 aa).

Over residues 1–15 the composition is skewed to low complexity; it reads MSRISTTSTTPSRVR. The tract at residues 1–54 is disordered; sequence MSRISTTSTTPSRVRAANSHYSVISKPRAQDDNGLTGGKPKSSGYDVKNDPAKR. Positions 104 to 180 form a coiled coil; it reads VMATAAAEDE…EAKISSLSSN (77 aa). Residues 207 to 285 form a disordered region; sequence KVKKEVAVES…AARAQKSPPV (79 aa). 2 stretches are compositionally biased toward pro residues: residues 221–236 and 256–272; these read PPSP…PPLP and FAPP…PPRP. Positions 392–448 form a coiled coil; it reads KADTLQEAAVEYRELKKLEKELSSYSDDPNIHYGVALKKMANLLDKSEQRIRRLVRL.

It belongs to the IPGA1 family.

The protein localises to the cytoplasm. It localises to the cytoskeleton. Functionally, microtubule-associated protein probably involved in the regulation of microtubule organization. This is INCREASED PETAL GROWTH ANISOTROPY 1-like protein 2 from Arabidopsis thaliana (Mouse-ear cress).